The sequence spans 417 residues: Serine hydroxymethyltransferase (417 aa).

(6S)-5,6,7,8-tetrahydrofolate contacts are provided by residues Leu121 and 125–127; that span reads GHL. At Lys230 the chain carries N6-(pyridoxal phosphate)lysine. (6S)-5,6,7,8-tetrahydrofolate is bound at residue 355–357; sequence SPF.

Belongs to the SHMT family. As to quaternary structure, homodimer. Requires pyridoxal 5'-phosphate as cofactor.

The protein resides in the cytoplasm. The catalysed reaction is (6R)-5,10-methylene-5,6,7,8-tetrahydrofolate + glycine + H2O = (6S)-5,6,7,8-tetrahydrofolate + L-serine. It participates in one-carbon metabolism; tetrahydrofolate interconversion. It functions in the pathway amino-acid biosynthesis; glycine biosynthesis; glycine from L-serine: step 1/1. Catalyzes the reversible interconversion of serine and glycine with tetrahydrofolate (THF) serving as the one-carbon carrier. This reaction serves as the major source of one-carbon groups required for the biosynthesis of purines, thymidylate, methionine, and other important biomolecules. Also exhibits THF-independent aldolase activity toward beta-hydroxyamino acids, producing glycine and aldehydes, via a retro-aldol mechanism. This chain is Serine hydroxymethyltransferase, found in Ruthia magnifica subsp. Calyptogena magnifica.